The following is a 407-amino-acid chain: Phosphopentomutase (407 aa).

Aspartate 10, aspartate 306, histidine 311, aspartate 347, histidine 348, and histidine 359 together coordinate Mn(2+).

This sequence belongs to the phosphopentomutase family. Mn(2+) is required as a cofactor.

Its subcellular location is the cytoplasm. It catalyses the reaction 2-deoxy-alpha-D-ribose 1-phosphate = 2-deoxy-D-ribose 5-phosphate. The enzyme catalyses alpha-D-ribose 1-phosphate = D-ribose 5-phosphate. It functions in the pathway carbohydrate degradation; 2-deoxy-D-ribose 1-phosphate degradation; D-glyceraldehyde 3-phosphate and acetaldehyde from 2-deoxy-alpha-D-ribose 1-phosphate: step 1/2. Its function is as follows. Isomerase that catalyzes the conversion of deoxy-ribose 1-phosphate (dRib-1-P) and ribose 1-phosphate (Rib-1-P) to deoxy-ribose 5-phosphate (dRib-5-P) and ribose 5-phosphate (Rib-5-P), respectively. This Escherichia coli O127:H6 (strain E2348/69 / EPEC) protein is Phosphopentomutase.